Reading from the N-terminus, the 173-residue chain is Co-chaperone protein HscB homolog (173 aa).

The region spanning 2–74 (NYFELFSLSP…ISRAEHMLSL (73 aa)) is the J domain.

Belongs to the HscB family. As to quaternary structure, interacts with HscA and stimulates its ATPase activity.

Functionally, co-chaperone involved in the maturation of iron-sulfur cluster-containing proteins. Seems to help targeting proteins to be folded toward HscA. This is Co-chaperone protein HscB homolog from Shewanella loihica (strain ATCC BAA-1088 / PV-4).